A 747-amino-acid chain; its full sequence is Probable cyclic nucleotide-gated ion channel 6 (747 aa).

The Cytoplasmic segment spans residues 1 to 117 (MFDTCGPKGV…DKFLLLCNKL (117 aa)). A helical transmembrane segment spans residues 118 to 138 (FVASCILAVSVDPLFLYLPFI). Topologically, residues 139-150 (NDKAKCVGIDRK) are extracellular. A helical membrane pass occupies residues 151–171 (LAIIVTTIRTVIDSFYLFHMA). Residues 172 to 205 (LRFRTAYVAPSSRVFGRGELVIDPAQIAKRYLQQ) are Cytoplasmic-facing. The chain crosses the membrane as a helical span at residues 206 to 226 (YFIIDLLSVLPVPQIIVWRFL). Residues 227 to 239 (YTSRGANVLATKQ) are Extracellular-facing. A helical transmembrane segment spans residues 240–260 (ALRYIVLVQYIPRFLRMYPLS). The Cytoplasmic segment spans residues 261–280 (SELKRTAGVFAETAWAGAAY). A helical membrane pass occupies residues 281–301 (YLLLYMLASHIVGALWYLLAL). The Extracellular portion of the chain corresponds to 302-407 (ERNNDCWSKA…GQGLETSTYP (106 aa)). A helical transmembrane segment spans residues 408–428 (GEVIFSITLAIAGLLLFALLI). Over 429–747 (GNMQTYLQSL…PEPDFSAEDH (319 aa)) the chain is Cytoplasmic. A nucleoside 3',5'-cyclic phosphate is bound by residues 514–638 (LFEN…SRQV) and Asp-585. Residues 630-645 (FRRLHSRQVQHTFRFY) are calmodulin-binding. One can recognise an IQ domain in the interval 650-679 (RTWAACFMQAAWRRYIKRKKLEQLRKEEEE).

Belongs to the cyclic nucleotide-gated cation channel (TC 1.A.1.5) family. As to quaternary structure, homotetramer or heterotetramer.

Its subcellular location is the cell membrane. Its function is as follows. Probable cyclic nucleotide-gated ion channel. The chain is Probable cyclic nucleotide-gated ion channel 6 (CNGC6) from Arabidopsis thaliana (Mouse-ear cress).